Here is a 418-residue protein sequence, read N- to C-terminus: Serine hydroxymethyltransferase (418 aa).

(6S)-5,6,7,8-tetrahydrofolate-binding positions include Leu121 and 125-127 (GHL). Position 230 is an N6-(pyridoxal phosphate)lysine (Lys230). 355–357 (SPF) provides a ligand contact to (6S)-5,6,7,8-tetrahydrofolate.

It belongs to the SHMT family. Homodimer. Requires pyridoxal 5'-phosphate as cofactor.

The protein localises to the cytoplasm. It catalyses the reaction (6R)-5,10-methylene-5,6,7,8-tetrahydrofolate + glycine + H2O = (6S)-5,6,7,8-tetrahydrofolate + L-serine. Its pathway is one-carbon metabolism; tetrahydrofolate interconversion. It participates in amino-acid biosynthesis; glycine biosynthesis; glycine from L-serine: step 1/1. Catalyzes the reversible interconversion of serine and glycine with tetrahydrofolate (THF) serving as the one-carbon carrier. This reaction serves as the major source of one-carbon groups required for the biosynthesis of purines, thymidylate, methionine, and other important biomolecules. Also exhibits THF-independent aldolase activity toward beta-hydroxyamino acids, producing glycine and aldehydes, via a retro-aldol mechanism. The sequence is that of Serine hydroxymethyltransferase from Streptococcus pyogenes serotype M18 (strain MGAS8232).